Reading from the N-terminus, the 453-residue chain is Probable glycine dehydrogenase (decarboxylating) subunit 1 (453 aa).

Belongs to the GcvP family. N-terminal subunit subfamily. In terms of assembly, the glycine cleavage system is composed of four proteins: P, T, L and H. In this organism, the P 'protein' is a heterodimer of two subunits.

It catalyses the reaction N(6)-[(R)-lipoyl]-L-lysyl-[glycine-cleavage complex H protein] + glycine + H(+) = N(6)-[(R)-S(8)-aminomethyldihydrolipoyl]-L-lysyl-[glycine-cleavage complex H protein] + CO2. The glycine cleavage system catalyzes the degradation of glycine. The P protein binds the alpha-amino group of glycine through its pyridoxal phosphate cofactor; CO(2) is released and the remaining methylamine moiety is then transferred to the lipoamide cofactor of the H protein. The polypeptide is Probable glycine dehydrogenase (decarboxylating) subunit 1 (Caulobacter sp. (strain K31)).